The chain runs to 453 residues: Ribulose bisphosphate carboxylase large chain (453 aa).

A propeptide spanning residues 1 to 2 (MS) is cleaved from the precursor. N-acetylproline is present on proline 3. The residue at position 14 (lysine 14) is an N6,N6,N6-trimethyllysine. Substrate contacts are provided by asparagine 123 and threonine 173. Lysine 175 serves as the catalytic Proton acceptor. Residue lysine 177 participates in substrate binding. Positions 201, 203, and 204 each coordinate Mg(2+). Lysine 201 carries the post-translational modification N6-carboxylysine. Catalysis depends on histidine 294, which acts as the Proton acceptor. The substrate site is built by arginine 295, histidine 327, and serine 379.

The protein belongs to the RuBisCO large chain family. Type I subfamily. As to quaternary structure, heterohexadecamer of 8 large chains and 8 small chains; disulfide-linked. The disulfide link is formed within the large subunit homodimers. It depends on Mg(2+) as a cofactor. Post-translationally, the disulfide bond which can form in the large chain dimeric partners within the hexadecamer appears to be associated with oxidative stress and protein turnover.

It is found in the plastid. It localises to the chloroplast. The catalysed reaction is 2 (2R)-3-phosphoglycerate + 2 H(+) = D-ribulose 1,5-bisphosphate + CO2 + H2O. It catalyses the reaction D-ribulose 1,5-bisphosphate + O2 = 2-phosphoglycolate + (2R)-3-phosphoglycerate + 2 H(+). RuBisCO catalyzes two reactions: the carboxylation of D-ribulose 1,5-bisphosphate, the primary event in carbon dioxide fixation, as well as the oxidative fragmentation of the pentose substrate in the photorespiration process. Both reactions occur simultaneously and in competition at the same active site. The chain is Ribulose bisphosphate carboxylase large chain from Galium aparine (Catchweed bedstraw).